The following is a 259-amino-acid chain: Phosphate import ATP-binding protein PstB 1 (259 aa).

An ABC transporter domain is found at 13-254; sequence IETKDVDLFY…PAEKETEDYI (242 aa). 45 to 52 serves as a coordination point for ATP; it reads GPSGCGKS.

This sequence belongs to the ABC transporter superfamily. Phosphate importer (TC 3.A.1.7) family. In terms of assembly, the complex is composed of two ATP-binding proteins (PstB), two transmembrane proteins (PstC and PstA) and a solute-binding protein (PstS).

Its subcellular location is the cell membrane. The enzyme catalyses phosphate(out) + ATP + H2O = ADP + 2 phosphate(in) + H(+). Its function is as follows. Part of the ABC transporter complex PstSACB involved in phosphate import. Responsible for energy coupling to the transport system. The polypeptide is Phosphate import ATP-binding protein PstB 1 (Listeria innocua serovar 6a (strain ATCC BAA-680 / CLIP 11262)).